The following is a 396-amino-acid chain: MNDTSFENCIKCTVCTTACPVSRVNPGYPGPKQAGPDGERLRLKDGALYDEALKYCINCKRCEVACPSDVKIGDIIQRARAKYDTTRPSLRNFVLSHTDLMGSVSTPFAPIVNTATSLKPVRQLLDAALKIDHRRTLPKYSFGTFRRWYRSVAAQQAQYKDQVAFFHGCFVNYNHPQLGKDLIKVLNAMGTGVQLLSKEKCCGVPLIANGFTDKARKQAITNVESIREAVGVKGIPVIATSSTCTFALRDEYPEVLNVDNKGLRDHIELATRWLWRKLDEGKTLPLKPLPLKVVYHTPCHMEKMGWTLYTLELLRNIPGLELTVLDSQCCGIAGTYGFKKENYPTSQAIGAPLFRQIEESGADLVVTDCETCKWQIEMSTSLRCEHPITLLAQALA.

2 4Fe-4S ferredoxin-type domains span residues 2–29 (NDTSFENCIKCTVCTTACPVSRVNPGYP) and 45–76 (DGALYDEALKYCINCKRCEVACPSDVKIGDII). Residues Cys-9, Cys-12, Cys-15, Cys-19, Cys-56, Cys-59, Cys-62, and Cys-66 each coordinate [4Fe-4S] cluster.

As to quaternary structure, composed of a catalytic GlpA/B dimer and of GlpC.

It is found in the cell inner membrane. It functions in the pathway polyol metabolism; glycerol degradation via glycerol kinase pathway; glycerone phosphate from sn-glycerol 3-phosphate (anaerobic route): step 1/1. In terms of biological role, electron transfer protein; may also function as the membrane anchor for the GlpAB dimer. This is Anaerobic glycerol-3-phosphate dehydrogenase subunit C (glpC) from Escherichia coli O157:H7.